The following is a 365-amino-acid chain: Chorismate synthase (365 aa).

NADP(+)-binding residues include R48 and R54. Residues 125–127 (RAS), 237–238 (NA), G277, 292–296 (KPTSS), and R318 contribute to the FMN site.

It belongs to the chorismate synthase family. In terms of assembly, homotetramer. FMNH2 serves as cofactor.

It catalyses the reaction 5-O-(1-carboxyvinyl)-3-phosphoshikimate = chorismate + phosphate. It participates in metabolic intermediate biosynthesis; chorismate biosynthesis; chorismate from D-erythrose 4-phosphate and phosphoenolpyruvate: step 7/7. In terms of biological role, catalyzes the anti-1,4-elimination of the C-3 phosphate and the C-6 proR hydrogen from 5-enolpyruvylshikimate-3-phosphate (EPSP) to yield chorismate, which is the branch point compound that serves as the starting substrate for the three terminal pathways of aromatic amino acid biosynthesis. This reaction introduces a second double bond into the aromatic ring system. This Polaromonas sp. (strain JS666 / ATCC BAA-500) protein is Chorismate synthase.